The following is a 371-amino-acid chain: Gustatory and pheromone receptor 39a, isoform A (371 aa).

Residues 1-41 are Cytoplasmic-facing; sequence MSKVCRDLRIYLRLLHIMGMMCWHFDSDHCQLVATSGSERY. A helical membrane pass occupies residues 42-62; it reads AVVYAGCILVSTTAGFIFALL. Over 63–80 the chain is Extracellular; the sequence is HPSRFHIAIYNQTGNFYE. An N-linked (GlcNAc...) asparagine glycan is attached at asparagine 73. Residues 81-101 form a helical membrane-spanning segment; that stretch reads AVIFRSTCVVLFLVYVILYAW. At 102 to 127 the chain is on the cytoplasmic side; sequence RHRYRDLVQHILRLNRRCASSCTNQQ. A helical transmembrane segment spans residues 128–148; it reads FLHNIILYGMLTILCFGNYLH. The Extracellular portion of the chain corresponds to 149 to 161; it reads GYTRAGLATLPLA. The helical transmembrane segment at 162–182 threads the bilayer; sequence LCMLVYIFAFLVLCLLLMFFV. At 183–228 the chain is on the cytoplasmic side; that stretch reads SLKQVMTAGLIHYNQQLCQGDLISGLRGRQQILKLCGGELNECFGL. Residues 229–249 traverse the membrane as a helical segment; that stretch reads LMLPIVALVLLMAPSGPFFLI. Residues 250–263 are Extracellular-facing; the sequence is STVLEGKFRPDECL. Residues 264 to 284 form a helical membrane-spanning segment; the sequence is IMLLTSSTWDTPWMIMLVLML. Residues 285 to 340 lie on the Cytoplasmic side of the membrane; the sequence is RTNGISEEANKTAKMLTKVPRTGTGLDRMIEKFLLKNLRQKPILTAYGFFALDKST. The chain crosses the membrane as a helical span at residues 341–361; that stretch reads LFKLFTAIFTYMVILVQFKEM. Over 362 to 371 the chain is Extracellular; that stretch reads ENSTKSINKF. Residue asparagine 363 is glycosylated (N-linked (GlcNAc...) asparagine).

It belongs to the insect chemoreceptor superfamily. Gustatory receptor (GR) family. Gr21a subfamily. Expressed in the adult labellar chemosensory neurons, and adult thorax and wing. In larvae, is expressed in neurons of the posterior pharyngeal sense organ.

The protein localises to the cell membrane. In terms of biological role, gustatory receptor which mediates acceptance or avoidance behavior, depending on its substrates. Plays a role in sustaining courtship behavior in males, possibly through the reception of a stimulating arrestant pheromone. The protein is Gustatory and pheromone receptor 39a, isoform A (Gr39a) of Drosophila melanogaster (Fruit fly).